Here is a 196-residue protein sequence, read N- to C-terminus: Nucleoside triphosphate pyrophosphatase (196 aa).

D73 acts as the Proton acceptor in catalysis.

This sequence belongs to the Maf family. A divalent metal cation serves as cofactor.

It localises to the cytoplasm. The enzyme catalyses a ribonucleoside 5'-triphosphate + H2O = a ribonucleoside 5'-phosphate + diphosphate + H(+). The catalysed reaction is a 2'-deoxyribonucleoside 5'-triphosphate + H2O = a 2'-deoxyribonucleoside 5'-phosphate + diphosphate + H(+). In terms of biological role, nucleoside triphosphate pyrophosphatase. May have a dual role in cell division arrest and in preventing the incorporation of modified nucleotides into cellular nucleic acids. In Chlamydia pneumoniae (Chlamydophila pneumoniae), this protein is Nucleoside triphosphate pyrophosphatase.